Here is a 129-residue protein sequence, read N- to C-terminus: MKNFHVVLEAAWLVRDVKTADDAIGVAISEAGKRLNPKLDFVEVDVGTTSCPLCGEPFSSVFIAANTALVGLIFEMKVFDAESAEHAERIAKSVIGKSLRDIPLTVVEVTEFERSTEKGEQQHKSKTEK.

Belongs to the UPF0212 family.

This is UPF0212 protein Mbar_A2902 from Methanosarcina barkeri (strain Fusaro / DSM 804).